A 1436-amino-acid chain; its full sequence is Inositol hexakisphosphate and diphosphoinositol-pentakisphosphate kinase 1 (1436 aa).

Residue 64-65 (KK) coordinates substrate. Residues Arg145, Lys198, His205, Arg224, 248–251 (EEFM), and 257–259 (DVK) each bind ATP. 224–225 (RK) contributes to the substrate binding site. The substrate site is built by Lys259 and Arg273. Residues Ser275, Asp320, and 332–334 (DVN) each bind ATP. 337-340 (SFVK) serves as a coordination point for substrate. The interval 382–453 (PTTSGTMMEL…VLDITRLLLA (72 aa)) is polyphosphoinositide-binding domain. Residues 915 to 998 (GSAPAGCGFR…TSSSRPGGYR (84 aa)) form a disordered region. A phosphoserine mark is found at Ser939, Ser982, Ser1032, Ser1068, Ser1140, and Ser1147. Disordered stretches follow at residues 1131–1191 (NHQA…GFSD) and 1389–1436 (SELS…EAIS). Over residues 1163–1181 (SSGPSSTVSSAGPSSPTTV) the composition is skewed to low complexity. Over residues 1405-1436 (LSEETELQAQEVSEEIDQESEVVDELPPEAIS) the composition is skewed to acidic residues.

It belongs to the histidine acid phosphatase family. VIP1 subfamily.

It localises to the cytoplasm. Its subcellular location is the cytosol. The protein resides in the cell membrane. It catalyses the reaction 1D-myo-inositol hexakisphosphate + ATP = 1-diphospho-1D-myo-inositol 2,3,4,5,6-pentakisphosphate + ADP. It carries out the reaction 5-diphospho-1D-myo-inositol 1,2,3,4,6-pentakisphosphate + ATP + H(+) = 1,5-bis(diphospho)-1D-myo-inositol 2,3,4,6-tetrakisphosphate + ADP. Bifunctional inositol kinase that acts in concert with the IP6K kinases IP6K1, IP6K2 and IP6K3 to synthesize the diphosphate group-containing inositol pyrophosphates diphosphoinositol pentakisphosphate, PP-InsP5, and bis-diphosphoinositol tetrakisphosphate, (PP)2-InsP4. PP-InsP5 and (PP)2-InsP4, also respectively called InsP7 and InsP8, regulate a variety of cellular processes, including apoptosis, vesicle trafficking, cytoskeletal dynamics, exocytosis, insulin signaling and neutrophil activation. Phosphorylates inositol hexakisphosphate (InsP6) at position 1 to produce PP-InsP5 which is in turn phosphorylated by IP6Ks to produce (PP)2-InsP4. Alternatively, phosphorylates PP-InsP5 at position 1, produced by IP6Ks from InsP6, to produce (PP)2-InsP4. Activated when cells are exposed to hyperosmotic stress. The protein is Inositol hexakisphosphate and diphosphoinositol-pentakisphosphate kinase 1 of Mus musculus (Mouse).